The chain runs to 267 residues: Hydroxynaphthalene reductase-like protein Arp2 (267 aa).

The NADP(+) site is built by Ile25, Asn45, Asp71, and Asn98. Active-site proton donor residues include Ser147 and Ser148. 4 residues coordinate NADP(+): Tyr162, Lys166, Val195, and Thr197. Tyr162 (proton acceptor) is an active-site residue. Lys166 acts as the Lowers pKa of active site Tyr in catalysis.

The protein belongs to the short-chain dehydrogenases/reductases (SDR) family.

Functionally, hydroxynaphthalene reductase-like protein; part of the Pks2 gene cluster that mediates the formation of infectious structures (appressoria), enabling these fungi to kill insects faster. The product of the Pks2 gene cluster is different from the one of Pks1 and has still not been identified. The sequence is that of Hydroxynaphthalene reductase-like protein Arp2 from Metarhizium brunneum (strain ARSEF 3297).